The sequence spans 56 residues: Botcinic acid biosynthesis cluster B protein 14 (56 aa).

It participates in polyketide biosynthesis. Its function is as follows. Part of the gene cluster B that mediates the biosynthesis of botcinic acid and its botcinin derivatives, acetate-derived polyketides that contribute to virulence when combined with the sesquiterpene botrydial. Botcinic acid and its derivatives have been shown to induce chlorosis and necrosis during host plant infection, but also have antifungal activities. Two polyketide synthases, BOA6 and BOA9, are involved in the biosynthesis of botcinins. BOA6 mediates the formation of the per-methylated tetraketide core by condensation of four units of malonyl-CoA with one unit of acetyl-CoA, which would be methylated in activated methylene groups to yield a bicyclic acid intermediate that could then either be converted to botrylactone derivatives or lose the starter acetate unit through a retro-Claisen type C-C bond cleavage to yield botcinin derivatives. The second polyketide synthase, BOA9, is probably required for the biosynthesis of the tetraketide side chain of botcinins. The methyltransferase (MT) domain within BOA6 is probably responsible for the incorporation of four methyl groups. The trans-enoyl reductase BOA5 might take over the enoyl reductase function of BOA6 that misses an ER domain. The monooxygenases BOA2, BOA3 and BOA4 might be involved in further hydroxylations at C4, C5 and C8, whereas BOA7, close to BOA9, could potentially be involved in the hydroxylation at C4 in the side chain of botcinins. The chain is Botcinic acid biosynthesis cluster B protein 14 from Botryotinia fuckeliana (strain B05.10) (Noble rot fungus).